We begin with the raw amino-acid sequence, 306 residues long: Phenylcoumaran benzylic ether reductase POP1 (306 aa).

Residues 9 to 15 (GGTGYIG), Arg-34, and Lys-43 contribute to the NADP(+) site. The Proton acceptor role is filled by Lys-131. Arg-135 is an NADP(+) binding site.

Belongs to the NmrA-type oxidoreductase family. Isoflavone reductase subfamily.

The catalysed reaction is (-)-dehydrodiconiferyl alcohol + NADPH + H(+) = (S)-isodihydrodehydrodiconiferyl alcohol + NADP(+). The enzyme catalyses (+)-dehydrodiconiferyl alcohol + NADPH + H(+) = (R)-isodihydrodehydrodiconiferyl alcohol + NADP(+). It carries out the reaction (2R,3S)-dihydrodehydrodiconiferyl alcohol + NADPH + H(+) = (S)-tetrahydrodehydrodiconiferyl alcohol + NADP(+). It catalyses the reaction (2S,3R)-dihydrodehydrodiconiferyl alcohol + NADPH + H(+) = (R)-tetrahydrodehydrodiconiferyl alcohol + NADP(+). Functionally, oxidoreductase involved in lignan biosynthesis. Catalyzes the NADPH-dependent reduction of phenylcoumaran benzylic ethers. Converts dehydrodiconiferyl alcohol (DDC) to isodihydrodehydrodiconiferyl alcohol (IDDDC), and dihydrodehydrodiconiferyl alcohol (DDDC) to tetrahydrodehydrodiconiferyl alcohol (TDDC). This chain is Phenylcoumaran benzylic ether reductase POP1, found in Populus trichocarpa (Western balsam poplar).